Here is a 670-residue protein sequence, read N- to C-terminus: Probable potassium transport system protein Kup 1 (670 aa).

The next 13 helical transmembrane spans lie at 14–34 (GAGFIIAMGIVYGDIGTSPLY), 58–78 (LSLIIWTLTLITTVKYVWIAL), 101–121 (WLIIPAMIGGAALLSDGALTP), 147–167 (LPIVIITLAILAVLFLIQRFG), 175–195 (FGPVMFIWFSFLGITGLINLF), 196–216 (GDFSVLQAINPYWAIHLLLSP), 220–240 (AGIFVLGSVFLATTGAEALYS), 252–272 (VSWPFVKVCIILSYCGQGAWL), 294–314 (LIIFSVILATLAAIIASQALI), 345–365 (LYIPAVNLGLWLAASFIVVYF), 374–394 (AYGLAITVTMLMTTTLLTVYL), 403–423 (VLVGLFFTVFIFIEGLFFAAS), and 427–447 (FMHGGYVVVIIAAMILFVMAI).

The protein belongs to the HAK/KUP transporter (TC 2.A.72) family.

Its subcellular location is the cell membrane. It catalyses the reaction K(+)(in) + H(+)(in) = K(+)(out) + H(+)(out). Transport of potassium into the cell. Likely operates as a K(+):H(+) symporter. In Lactococcus lactis subsp. lactis (strain IL1403) (Streptococcus lactis), this protein is Probable potassium transport system protein Kup 1.